A 34-amino-acid polypeptide reads, in one-letter code: Photosystem II reaction center protein M (34 aa).

A helical transmembrane segment spans residues 5–25 (ILGLTATALFIIIPTSFLLIL).

The protein belongs to the PsbM family. PSII is composed of 1 copy each of membrane proteins PsbA, PsbB, PsbC, PsbD, PsbE, PsbF, PsbH, PsbI, PsbJ, PsbK, PsbL, PsbM, PsbT, PsbX, PsbY, PsbZ, Psb30/Ycf12, at least 3 peripheral proteins of the oxygen-evolving complex and a large number of cofactors. It forms dimeric complexes.

It localises to the plastid. The protein localises to the chloroplast thylakoid membrane. Functionally, one of the components of the core complex of photosystem II (PSII). PSII is a light-driven water:plastoquinone oxidoreductase that uses light energy to abstract electrons from H(2)O, generating O(2) and a proton gradient subsequently used for ATP formation. It consists of a core antenna complex that captures photons, and an electron transfer chain that converts photonic excitation into a charge separation. This subunit is found at the monomer-monomer interface. The chain is Photosystem II reaction center protein M from Stigeoclonium helveticum (Green alga).